Reading from the N-terminus, the 270-residue chain is Urease accessory protein UreD (270 aa).

The protein belongs to the UreD family. As to quaternary structure, ureD, UreF and UreG form a complex that acts as a GTP-hydrolysis-dependent molecular chaperone, activating the urease apoprotein by helping to assemble the nickel containing metallocenter of UreC. The UreE protein probably delivers the nickel.

It localises to the cytoplasm. Required for maturation of urease via the functional incorporation of the urease nickel metallocenter. The protein is Urease accessory protein UreD of Actinobacillus pleuropneumoniae serotype 5b (strain L20).